A 359-amino-acid polypeptide reads, in one-letter code: tRNA-specific 2-thiouridylase MnmA (359 aa).

ATP contacts are provided by residues 10–17 (GISGGVDS) and Leu36. Cys101 (nucleophile) is an active-site residue. Cys101 and Cys197 form a disulfide bridge. An ATP-binding site is contributed by Gly125. Residues 147-149 (KDQ) form an interaction with tRNA region. Cys197 acts as the Cysteine persulfide intermediate in catalysis. The interaction with tRNA stretch occupies residues 306-307 (RY).

This sequence belongs to the MnmA/TRMU family.

The protein resides in the cytoplasm. The catalysed reaction is S-sulfanyl-L-cysteinyl-[protein] + uridine(34) in tRNA + AH2 + ATP = 2-thiouridine(34) in tRNA + L-cysteinyl-[protein] + A + AMP + diphosphate + H(+). Catalyzes the 2-thiolation of uridine at the wobble position (U34) of tRNA, leading to the formation of s(2)U34. The protein is tRNA-specific 2-thiouridylase MnmA of Chlorobium chlorochromatii (strain CaD3).